The chain runs to 1574 residues: Synaptojanin-1 (1574 aa).

An SAC domain is found at 119-442 (VRKVLNSGNF…GDSISKIYAG (324 aa)). The segment at 500–899 (GSLRVSEQTL…GPPDGTVLVS (400 aa)) is catalytic. Residues serine 820 and serine 830 each carry the phosphoserine modification. The region spanning 894–971 (GTVLVSIKSS…RTITITLKSP (78 aa)) is the RRM domain. The segment covering 1029–1054 (HLQPSSSSGLGTSPSSSPRTSPCQSP) has biased composition (low complexity). The interval 1029–1327 (HLQPSSSSGL…GVKQEPTLKS (299 aa)) is disordered. Position 1053 is a phosphoserine (serine 1053). The segment covering 1090–1100 (PAAQKESSQTI) has biased composition (polar residues). Pro residues predominate over residues 1105 to 1127 (PPPPRPVAPPARPAPPQRPPPPS). A phosphoserine mark is found at serine 1147 and serine 1175. The residue at position 1198 (arginine 1198) is an Omega-N-methylarginine. Residue threonine 1217 is modified to Phosphothreonine. Low complexity predominate over residues 1287–1310 (SRSSQSLPSDSSPQLQQEQPTGQQ). Phosphoserine occurs at positions 1289 and 1350. Residue threonine 1354 is modified to Phosphothreonine. Disordered regions lie at residues 1382-1519 (TMPP…SFDD) and 1532-1574 (LPAR…FTER). The segment covering 1389–1413 (QSKSQESVGSSANPFPSLPTRNPFT) has biased composition (polar residues). 3 tandem repeats follow at residues 1401 to 1403 (NPF), 1410 to 1412 (NPF), and 1421 to 1423 (NPF). Residues 1401–1423 (NPFPSLPTRNPFTDRTAAPGNPF) are 3 X 3 AA repeats of N-P-F. 2 stretches are compositionally biased toward polar residues: residues 1424 to 1436 (RVQSQESEATSWL) and 1472 to 1484 (DLQSQSTVKTSNP). Residues 1535–1548 (RRPPPPPPPVPLLP) show a composition bias toward pro residues. Over residues 1549–1563 (PGTTSSAGPSTTLSS) the composition is skewed to low complexity. A Phosphoserine modification is found at serine 1566.

This sequence belongs to the synaptojanin family. In the central section; belongs to the inositol 1,4,5-trisphosphate 5-phosphatase family. In terms of assembly, interacts with ASH/GRB2. Interacts with PACSIN1, PACSIN2 and PACSIN3. Interacts with AMPH, SH3GL1, SH3GL2 and SH3GL3. Interacts with MYO1E (via SH3 domain). Interacts with BIN1 and DNM1. Interacts with EPS15. Found in neonatal brain, and in a wide variety of adult non-neuronal tissues. Concentrated at clathrin-coated endocytic intermediates in nerve terminals. Also detected in the lung and heart. Expressed at higher levels than isoform 2 in the testis and liver and is not detected in the skeletal muscle. In terms of tissue distribution, expressed predominantly in the neurons, but is also found in all other tissues at much lower levels. Also detected in the lung and heart. Epressed at lower levels than isoform 1 in the testis and liver and is not detected in the skeletal muscle. As to expression, expressed in the brain.

It localises to the membrane. The protein resides in the cytoplasm. Its subcellular location is the perinuclear region. The catalysed reaction is a 1,2-diacyl-sn-glycero-3-phospho-(1D-myo-inositol-4,5-bisphosphate) + H2O = a 1,2-diacyl-sn-glycero-3-phospho-(1D-myo-inositol 4-phosphate) + phosphate. In terms of biological role, phosphatase that acts on various phosphoinositides, including phosphatidylinositol 4-phosphate, phosphatidylinositol (4,5)-bisphosphate and phosphatidylinositol (3,4,5)-trisphosphate. Has a role in clathrin-mediated endocytosis. Hydrolyzes PIP2 bound to actin regulatory proteins resulting in the rearrangement of actin filaments downstream of tyrosine kinase and ASH/GRB2. In Rattus norvegicus (Rat), this protein is Synaptojanin-1 (Synj1).